The following is a 159-amino-acid chain: ATP synthase subunit b (159 aa).

The chain crosses the membrane as a helical span at residues 7–27; that stretch reads VIFMTIINFCILVAILKHFFW.

It belongs to the ATPase B chain family. In terms of assembly, F-type ATPases have 2 components, F(1) - the catalytic core - and F(0) - the membrane proton channel. F(1) has five subunits: alpha(3), beta(3), gamma(1), delta(1), epsilon(1). F(0) has three main subunits: a(1), b(2) and c(10-14). The alpha and beta chains form an alternating ring which encloses part of the gamma chain. F(1) is attached to F(0) by a central stalk formed by the gamma and epsilon chains, while a peripheral stalk is formed by the delta and b chains.

The protein resides in the cell membrane. In terms of biological role, f(1)F(0) ATP synthase produces ATP from ADP in the presence of a proton or sodium gradient. F-type ATPases consist of two structural domains, F(1) containing the extramembraneous catalytic core and F(0) containing the membrane proton channel, linked together by a central stalk and a peripheral stalk. During catalysis, ATP synthesis in the catalytic domain of F(1) is coupled via a rotary mechanism of the central stalk subunits to proton translocation. Its function is as follows. Component of the F(0) channel, it forms part of the peripheral stalk, linking F(1) to F(0). The sequence is that of ATP synthase subunit b from Clostridium botulinum (strain Alaska E43 / Type E3).